The sequence spans 335 residues: Holliday junction branch migration complex subunit RuvB (335 aa).

The tract at residues 4-183 is large ATPase domain (RuvB-L); that stretch reads ADNLNVTSII…FGIVQRLEFY (180 aa). ATP is bound by residues Arg-23, Gly-64, Lys-67, Thr-68, Thr-69, 130–132, Arg-173, Tyr-183, and Arg-220; that span reads EDY. Residue Thr-68 coordinates Mg(2+). The small ATPAse domain (RuvB-S) stretch occupies residues 184 to 254; it reads PTKDLQNIIS…VAMNALNMLN (71 aa). The segment at 257–335 is head domain (RuvB-H); that stretch reads TAGFNFMDRQ…HFSLKQSRDI (79 aa). The DNA site is built by Arg-293, Arg-312, and Arg-317.

It belongs to the RuvB family. As to quaternary structure, homohexamer. Forms an RuvA(8)-RuvB(12)-Holliday junction (HJ) complex. HJ DNA is sandwiched between 2 RuvA tetramers; dsDNA enters through RuvA and exits via RuvB. An RuvB hexamer assembles on each DNA strand where it exits the tetramer. Each RuvB hexamer is contacted by two RuvA subunits (via domain III) on 2 adjacent RuvB subunits; this complex drives branch migration. In the full resolvosome a probable DNA-RuvA(4)-RuvB(12)-RuvC(2) complex forms which resolves the HJ.

It localises to the cytoplasm. The enzyme catalyses ATP + H2O = ADP + phosphate + H(+). In terms of biological role, the RuvA-RuvB-RuvC complex processes Holliday junction (HJ) DNA during genetic recombination and DNA repair, while the RuvA-RuvB complex plays an important role in the rescue of blocked DNA replication forks via replication fork reversal (RFR). RuvA specifically binds to HJ cruciform DNA, conferring on it an open structure. The RuvB hexamer acts as an ATP-dependent pump, pulling dsDNA into and through the RuvAB complex. RuvB forms 2 homohexamers on either side of HJ DNA bound by 1 or 2 RuvA tetramers; 4 subunits per hexamer contact DNA at a time. Coordinated motions by a converter formed by DNA-disengaged RuvB subunits stimulates ATP hydrolysis and nucleotide exchange. Immobilization of the converter enables RuvB to convert the ATP-contained energy into a lever motion, pulling 2 nucleotides of DNA out of the RuvA tetramer per ATP hydrolyzed, thus driving DNA branch migration. The RuvB motors rotate together with the DNA substrate, which together with the progressing nucleotide cycle form the mechanistic basis for DNA recombination by continuous HJ branch migration. Branch migration allows RuvC to scan DNA until it finds its consensus sequence, where it cleaves and resolves cruciform DNA. The protein is Holliday junction branch migration complex subunit RuvB of Baumannia cicadellinicola subsp. Homalodisca coagulata.